Consider the following 145-residue polypeptide: 3-hydroxyacyl-[acyl-carrier-protein] dehydratase FabZ (145 aa).

The active site involves H49.

The protein belongs to the thioester dehydratase family. FabZ subfamily.

The protein localises to the cytoplasm. The enzyme catalyses a (3R)-hydroxyacyl-[ACP] = a (2E)-enoyl-[ACP] + H2O. Its function is as follows. Involved in unsaturated fatty acids biosynthesis. Catalyzes the dehydration of short chain beta-hydroxyacyl-ACPs and long chain saturated and unsaturated beta-hydroxyacyl-ACPs. This is 3-hydroxyacyl-[acyl-carrier-protein] dehydratase FabZ from Rickettsia typhi (strain ATCC VR-144 / Wilmington).